Consider the following 167-residue polypeptide: Phosphopantetheine adenylyltransferase (167 aa).

Thr10 contributes to the substrate binding site. ATP is bound by residues 10–11 and His18; that span reads TF. The substrate site is built by Ala77 and Arg91. Residues 92–94, Glu102, and 127–133 each bind ATP; these read GLR and YSFISSS.

Belongs to the bacterial CoaD family. Homohexamer. Mg(2+) is required as a cofactor.

The protein resides in the cytoplasm. The enzyme catalyses (R)-4'-phosphopantetheine + ATP + H(+) = 3'-dephospho-CoA + diphosphate. Its pathway is cofactor biosynthesis; coenzyme A biosynthesis; CoA from (R)-pantothenate: step 4/5. In terms of biological role, reversibly transfers an adenylyl group from ATP to 4'-phosphopantetheine, yielding dephospho-CoA (dPCoA) and pyrophosphate. The chain is Phosphopantetheine adenylyltransferase from Thermomicrobium roseum (strain ATCC 27502 / DSM 5159 / P-2).